The primary structure comprises 535 residues: Peroxisomal membrane protein PEX29 (535 aa).

2 helical membrane-spanning segments follow: residues 139-159 (LSVPFVLIDQVIIIFSWSKPL) and 176-196 (ILLLSLPFFYTCFEIIVPAYM). N-linked (GlcNAc...) asparagine glycosylation occurs at Asn239. Residues 247–267 (MLLYVMSYDFVTSLIVKYLYF) traverse the membrane as a helical segment. Asn271 carries an N-linked (GlcNAc...) asparagine glycan. Transmembrane regions (helical) follow at residues 272-292 (ITIFIFVALLTSGTLLTLFGA) and 297-317 (AMLPFIKVTLSVGLWAATIAM). Residues Asn450 and Asn515 are each glycosylated (N-linked (GlcNAc...) asparagine). Positions 511-535 (AHRRNKSMESSNSLHPVKSIDSVDG) are disordered.

Belongs to the PEX28-32 family. PEX29 subfamily.

It is found in the endoplasmic reticulum membrane. Functionally, with PEX23, contributes to the formation of endoplasmic reticulum-mitochondria junctions which are important for mitochondrial function. Involved in lipid dropplets formation. The chain is Peroxisomal membrane protein PEX29 from Ogataea parapolymorpha (strain ATCC 26012 / BCRC 20466 / JCM 22074 / NRRL Y-7560 / DL-1) (Yeast).